Consider the following 546-residue polypeptide: Src substrate cortactin (546 aa).

The interval 1–28 (MWKASAGHAVSITQDDGGADDWETDPDF) is disordered. Acidic residues predominate over residues 17–28 (GGADDWETDPDF). Cortactin repeat units follow at residues 80 to 116 (ASHG…SQVD), 117 to 153 (SVRG…SQKD), 154 to 190 (YSSG…SQKD), 191 to 227 (YSKG…SQKD), 228 to 264 (YVKG…SQKD), and 265 to 301 (YKTG…SQQD). Residues K87 and K107 each carry the N6-acetyllysine modification. A Phosphoserine modification is found at S113. R119 carries the omega-N-methylarginine modification. The residue at position 124 (K124) is an N6-acetyllysine. An N6-acetyllysine; alternate modification is found at K144. K144 is covalently cross-linked (Glycyl lysine isopeptide (Lys-Gly) (interchain with G-Cter in SUMO1); alternate). K144 is covalently cross-linked (Glycyl lysine isopeptide (Lys-Gly) (interchain with G-Cter in SUMO2); alternate). S150 carries the post-translational modification Phosphoserine. 3 positions are modified to N6-acetyllysine: K152, K161, and K171. An N6-acetyllysine; alternate modification is found at K181. Residue K181 forms a Glycyl lysine isopeptide (Lys-Gly) (interchain with G-Cter in SUMO1); alternate linkage. A Glycyl lysine isopeptide (Lys-Gly) (interchain with G-Cter in SUMO2); alternate cross-link involves residue K181. 2 positions are modified to N6-acetyllysine: K193 and K198. K218 is covalently cross-linked (Glycyl lysine isopeptide (Lys-Gly) (interchain with G-Cter in SUMO1)). The residue at position 235 (K235) is an N6-acetyllysine. S261 carries the phosphoserine modification. At K272 the chain carries N6-acetyllysine. N6-acetyllysine; alternate is present on K295. K295 is covalently cross-linked (Glycyl lysine isopeptide (Lys-Gly) (interchain with G-Cter in SUMO2); alternate). One copy of the Cortactin 7; truncated repeat lies at 302-324 (YAKGFGGKYGVQKDRMDKNASTF). N6-acetyllysine is present on residues K304, K309, K314, and K346. The stretch at 348-401 (SNIRANFENLAKEREQEDRRKAEAERAQRMAKERQEQEEARRKLEEQARAKKQT) forms a coiled coil. The interval 355-424 (ENLAKEREQE…PPSSPIYEDA (70 aa)) is disordered. The span at 357 to 396 (LAKEREQEDRRKAEAERAQRMAKERQEQEEARRKLEEQAR) shows a compositional bias: basic and acidic residues. T401 is subject to Phosphothreonine. 4 positions are modified to phosphoserine: S405, S407, S417, and S418. A phosphotyrosine mark is found at Y421 and Y442. S443 carries the post-translational modification Phosphoserine. At Y466 the chain carries Phosphotyrosine; by FAK1. A phosphotyrosine; by SRC mark is found at Y482 and Y485. The 59-residue stretch at 488-546 (DLGITAIALYDYQAAGDDEISFDPDDIITNIEMIDDGWWRGVCKGRYGLFPANYVELRQ) folds into the SH3 domain.

In terms of assembly, part of a complex composed of NEDD9, AURKA and CTTN; within the complex NEDD9 acts as a scaffold protein and is required for complex formation. Interacts (via N-terminus) with NEDD9. Identified in a complex containing FGFR4, NCAM1, CDH2, PLCG1, FRS2, SRC, SHC1, GAP43 and CTTN. Forms a complex with ABL1 and MYLK. Interacts with SHANK2 and SHANK3 (via its SH3 domain). Interacts with PLXDC2 and SRCIN1. Interacts with SAMSN1 (via SH3 domain). Interacts (via SH3 domain) with ASAP1 (via Pro-rich region). Interacts (via SH3 domain) with DNM2. Interacts with ACTN1. Interacts with FER. Interacts with KCNA2 (via non-phosphorylated C-terminus). Interacts with FGD1. Interacts with ABL2. Interacts with CTTNBP2NL; this interaction may target CTTN to stress fibers. Interacts with CTTNBP2; this interaction may target CTTN at the cell cortex or dendritic spines. Interacts with KCNH1. Interacts (via SH3 domain) with DIP2A (via N-terminus); the interaction enhances CTTN acetylation and is required for proper synaptic transmission. Interacts with XIRP1 (via N-terminus); the interaction promotes CTTN localization to intercalated disks in cardiomyocytes. Acetylated. Post-translationally, phosphorylated by FER. Phosphorylated in response to FGR activation. Phosphorylation by SRC promotes MYLK binding. Phosphorylated on tyrosine residues in response to CHRM1 activation. Phosphorylated by PTK2/FAK1 in response to cell adhesion. Tyrosine phosphorylation in transformed cells may contribute to cellular growth regulation and transformation. Phosphorylated by PKN2 at both serine and threonine residues in a GTP-bound Rac1-dependent manner in hyaluronan-induced astrocytes and hence down-regulated CTTN ability to associate with filamentous actin. In terms of tissue distribution, expressed at intercalated disks in the heart (at protein level). Expressed in most tissues, except in B-lymphocytes or plasma cells.

It is found in the cytoplasm. Its subcellular location is the cytoskeleton. It localises to the cell projection. The protein localises to the lamellipodium. The protein resides in the ruffle. It is found in the dendrite. Its subcellular location is the cell membrane. It localises to the podosome. The protein localises to the cell junction. The protein resides in the focal adhesion. It is found in the membrane. Its subcellular location is the clathrin-coated pit. It localises to the dendritic spine. The protein localises to the cell cortex. The protein resides in the endoplasmic reticulum. Functionally, contributes to the organization of the actin cytoskeleton and cell shape. Plays a role in the formation of lamellipodia and in cell migration. Plays a role in the regulation of neuron morphology, axon growth and formation of neuronal growth cones. Through its interaction with CTTNBP2, involved in the regulation of neuronal spine density. Plays a role in focal adhesion assembly and turnover. In complex with ABL1 and MYLK regulates cortical actin-based cytoskeletal rearrangement critical to sphingosine 1-phosphate (S1P)-mediated endothelial cell (EC) barrier enhancement. Plays a role in intracellular protein transport and endocytosis, and in modulating the levels of potassium channels present at the cell membrane. Plays a role in receptor-mediated endocytosis via clathrin-coated pits. Required for stabilization of KCNH1 channels at the cell membrane. This chain is Src substrate cortactin (Cttn), found in Mus musculus (Mouse).